A 443-amino-acid polypeptide reads, in one-letter code: ATP-dependent protease ATPase subunit HslU (443 aa).

Residues Ile-18, 60–65 (GVGKTE), Asp-256, Glu-321, and Arg-393 contribute to the ATP site.

Belongs to the ClpX chaperone family. HslU subfamily. A double ring-shaped homohexamer of HslV is capped on each side by a ring-shaped HslU homohexamer. The assembly of the HslU/HslV complex is dependent on binding of ATP.

It localises to the cytoplasm. Functionally, ATPase subunit of a proteasome-like degradation complex; this subunit has chaperone activity. The binding of ATP and its subsequent hydrolysis by HslU are essential for unfolding of protein substrates subsequently hydrolyzed by HslV. HslU recognizes the N-terminal part of its protein substrates and unfolds these before they are guided to HslV for hydrolysis. The protein is ATP-dependent protease ATPase subunit HslU of Pasteurella multocida (strain Pm70).